The primary structure comprises 964 residues: Activator of stress genes 1 (964 aa).

Residues C21 to C47 constitute a DNA-binding region (zn(2)-C6 fungal-type). The disordered stretch occupies residues A104–R125. Phosphoserine; by ATM or ATR is present on S166. The residue at position 186 (S186) is a Phosphoserine. 3 stretches are compositionally biased toward polar residues: residues P190–P201, K209–D225, and N733–S759. Disordered stretches follow at residues P190 to D225, N733 to P764, and N800 to Y900. Residues N800–N896 are compositionally biased toward low complexity. At S963 the chain carries Phosphoserine.

This sequence belongs to the ASG1 family.

The protein resides in the nucleus. Its function is as follows. Probable transcription factor involved in the stress response. This chain is Activator of stress genes 1 (ASG1), found in Saccharomyces cerevisiae (strain ATCC 204508 / S288c) (Baker's yeast).